The following is a 771-amino-acid chain: Tubulin monoglycylase TTLL3 (771 aa).

The segment at 70 to 106 (PRPSFSQPRRHDHETETTDEGDSSDEDDLGEEVERDD) is disordered. A compositionally biased stretch (acidic residues) spans 86–106 (TTDEGDSSDEDDLGEEVERDD). One can recognise a TTL domain in the interval 220 to 566 (EGEKMGEVHN…RRSERNTDTG (347 aa)). Residues lysine 339, 345–346 (RG), 377–380 (QKYI), 390–392 (KFD), and 434–435 (CN) contribute to the ATP site. Position 345 (arginine 345) interacts with a protein. Serine 437 lines the L-glutamate pocket. The Mg(2+) site is built by aspartate 512, glutamate 525, and asparagine 527. Glutamate 525 contacts ATP. Disordered stretches follow at residues 605–640 (LIQSHPEPLSKSTNHKSSLLSSPCTSGKENQSEEVK) and 682–713 (TELHHPQRLSHTQPQSDRPHTHRTRSNLPTLY). Over residues 614-633 (SKSTNHKSSLLSSPCTSGKE) the composition is skewed to polar residues.

Mg(2+) is required as a cofactor.

It is found in the cytoplasm. The protein localises to the cytoskeleton. The protein resides in the cell projection. Its subcellular location is the cilium. It localises to the cilium axoneme. It is found in the flagellum axoneme. It catalyses the reaction L-glutamyl-[protein] + glycine + ATP = glycyl-L-glutamyl-[protein] + ADP + phosphate + H(+). Monoglycylase which modifies alpha- and beta-tubulin, adding a single glycine on the gamma-carboxyl groups of specific glutamate residues to generate monoglycine side chains within the C-terminal tail of tubulin. Not involved in elongation step of the polyglycylation reaction. Preferentially glycylates a beta-tail peptide over the alpha-tail, although shifts its preference toward alpha-tail as beta-tail glutamylation increases. Competes with polyglutamylases for modification site on beta-tubulin substrate, thereby creating an anticorrelation between glycylation and glutamylation reactions. Not involved in elongation step of the polyglycylation reaction. The sequence is that of Tubulin monoglycylase TTLL3 (ttll3) from Danio rerio (Zebrafish).